Here is a 247-residue protein sequence, read N- to C-terminus: ATP synthase subunit a, chloroplastic (247 aa).

5 consecutive transmembrane segments (helical) span residues 28–48 (GQVL…CLLG), 95–115 (VPFL…GALI), 134–154 (INTT…AGIS), 199–219 (LVVG…IMLL), and 220–240 (GLFT…AYIG).

It belongs to the ATPase A chain family. As to quaternary structure, F-type ATPases have 2 components, CF(1) - the catalytic core - and CF(0) - the membrane proton channel. CF(1) has five subunits: alpha(3), beta(3), gamma(1), delta(1), epsilon(1). CF(0) has four main subunits: a, b, b' and c.

It is found in the plastid. It localises to the chloroplast thylakoid membrane. Its function is as follows. Key component of the proton channel; it plays a direct role in the translocation of protons across the membrane. This Chlorella vulgaris (Green alga) protein is ATP synthase subunit a, chloroplastic.